We begin with the raw amino-acid sequence, 179 residues long: Negative modulator of initiation of replication (179 aa).

Residues 86-87 (AV) form an interaction with DNA region.

Belongs to the SeqA family. As to quaternary structure, homodimer. Polymerizes to form helical filaments.

It localises to the cytoplasm. Negative regulator of replication initiation, which contributes to regulation of DNA replication and ensures that replication initiation occurs exactly once per chromosome per cell cycle. Binds to pairs of hemimethylated GATC sequences in the oriC region, thus preventing assembly of replication proteins and re-initiation at newly replicated origins. Repression is relieved when the region becomes fully methylated. The chain is Negative modulator of initiation of replication from Shewanella woodyi (strain ATCC 51908 / MS32).